The sequence spans 176 residues: Endoribonuclease YbeY (176 aa).

His139, His143, and His149 together coordinate Zn(2+).

Belongs to the endoribonuclease YbeY family. Zn(2+) serves as cofactor.

It is found in the cytoplasm. Single strand-specific metallo-endoribonuclease involved in late-stage 70S ribosome quality control and in maturation of the 3' terminus of the 16S rRNA. The sequence is that of Endoribonuclease YbeY from Acaryochloris marina (strain MBIC 11017).